Consider the following 303-residue polypeptide: Serine/threonine-protein phosphatase PP-X homolog 2 (303 aa).

Mn(2+) is bound by residues Asp-51, His-53, Asp-79, and Asn-111. Catalysis depends on His-112, which acts as the Proton donor. Mn(2+) contacts are provided by His-161 and His-235.

It belongs to the PPP phosphatase family. PP-4 (PP-X) subfamily. Mn(2+) is required as a cofactor.

It carries out the reaction O-phospho-L-seryl-[protein] + H2O = L-seryl-[protein] + phosphate. It catalyses the reaction O-phospho-L-threonyl-[protein] + H2O = L-threonyl-[protein] + phosphate. In Paramecium tetraurelia, this protein is Serine/threonine-protein phosphatase PP-X homolog 2 (Ppx2).